The chain runs to 107 residues: Nucleoid-associated protein BMEA_A0033 (107 aa).

The protein belongs to the YbaB/EbfC family. In terms of assembly, homodimer.

It localises to the cytoplasm. It is found in the nucleoid. In terms of biological role, binds to DNA and alters its conformation. May be involved in regulation of gene expression, nucleoid organization and DNA protection. The sequence is that of Nucleoid-associated protein BMEA_A0033 from Brucella melitensis biotype 2 (strain ATCC 23457).